We begin with the raw amino-acid sequence, 973 residues long: GATOR2 complex protein WDR59 (973 aa).

WD repeat units follow at residues 57–98 (QSKW…GEVC), 103–143 (GHTR…KPTV), 146–185 (SAVAGASQVKWNKKNANCLATSHDGDVRIWDKRKPSTAVE), 189–229 (AHLS…KYLN), 232–276 (PCQV…TPVH), and 280–324 (GHDD…QRLC). The tract at residues 346–365 (DKALQPQDSEPQHSSGHGDE) is disordered. Polar residues predominate over residues 351–360 (PQDSEPQHSS). Positions 393–494 (QEFSLINVQI…RQLVSWLESV (102 aa)) constitute an RWD domain. Residues 900-920 (YCSHCRSEARGTQCAICKGFT) form a C4-type zinc finger. Residues Cys901, Cys904, Cys913, Cys916, Cys926, Cys937, His942, His945, His948, Cys959, Cys963, Cys965, and Cys967 each coordinate Zn(2+). The RING-type; atypical zinc finger occupies 921–970 (FQCAICHVAVRGSSNFCLTCGHGGHTSHMMEWFRTQEVCPTGCGCHCLLE).

It belongs to the WD repeat WDR59 family. As to quaternary structure, component of the GATOR2 subcomplex, composed of MIOS, SEC13, SEH1L, WDR24 and WDR59. The GATOR2 complex interacts with CASTOR1 and CASTOR2; the interaction is negatively regulated by arginine. The GATOR2 complex interacts with SESN1, SESN2 and SESN3; the interaction is negatively regulated by amino acids. Interacts with DDB1-CUL4A/B E3 ligase complexes.

The protein resides in the lysosome membrane. The GATOR2 complex is negatively regulated by the upstream amino acid sensors CASTOR1 and SESN2, which sequester the GATOR2 complex in absence of amino acids. In the presence of abundant amino acids, GATOR2 is released from CASTOR1 and SESN2 and activated. In terms of biological role, as a component of the GATOR2 complex, functions as an activator of the amino acid-sensing branch of the mTORC1 signaling pathway. The GATOR2 complex indirectly activates mTORC1 through the inhibition of the GATOR1 subcomplex. GATOR2 probably acts as an E3 ubiquitin-protein ligase toward GATOR1. In the presence of abundant amino acids, the GATOR2 complex mediates ubiquitination of the NPRL2 core component of the GATOR1 complex, leading to GATOR1 inactivation. In the absence of amino acids, GATOR2 is inhibited, activating the GATOR1 complex. This chain is GATOR2 complex protein WDR59, found in Gallus gallus (Chicken).